We begin with the raw amino-acid sequence, 345 residues long: Proto-oncogene serine/threonine-protein kinase mos (345 aa).

In terms of domain architecture, Protein kinase spans 63 to 344; sequence VCLLQRLGAG…LDLRALQAEL (282 aa). Residues 69 to 77 and Lys-90 each bind ATP; that span reads LGAGGFGSV. Asp-202 (proton acceptor) is an active-site residue.

Belongs to the protein kinase superfamily. Ser/Thr protein kinase family. Interacts with MAP2K1/MEK1. In terms of tissue distribution, restricted to gonadal tissues.

The protein localises to the cytoplasm. The enzyme catalyses L-seryl-[protein] + ATP = O-phospho-L-seryl-[protein] + ADP + H(+). It carries out the reaction L-threonyl-[protein] + ATP = O-phospho-L-threonyl-[protein] + ADP + H(+). Its function is as follows. Serine/threonine kinase involved in the regulation of MAPK signaling. Is an activator of the ERK1/2 signaling cascade playing an essential role in the stimulation of oocyte maturation. The sequence is that of Proto-oncogene serine/threonine-protein kinase mos from Sus scrofa (Pig).